The chain runs to 239 residues: MNIEQFQSMLEEKGITLSSRQLEQFKIYFETLVEWNEKMNLTAITEKEEVYLKHFFDSITAAFYYDFSKPFSICDVGAGAGFPSIPLKICFPHLKVTIVDSLQKRINFLNHLAQKLELSDVAFCHDRAETFGKKEGVRESYDIVMARAVARLSVLSELCLPLVKVGGTFIAMKGAAANEEIENGKYALEVLGGELKEMSTFQLPFEESERNILLIEKKRKTPKKYPRKPGTPNKLPIEK.

S-adenosyl-L-methionine contacts are provided by residues Gly-77, Phe-82, 128 to 129, and Arg-147; that span reads AE.

Belongs to the methyltransferase superfamily. RNA methyltransferase RsmG family.

The protein resides in the cytoplasm. Its function is as follows. Specifically methylates the N7 position of guanine in position 535 of 16S rRNA. This Bacillus cereus (strain G9842) protein is Ribosomal RNA small subunit methyltransferase G.